The following is a 200-amino-acid chain: Phospholipase A2 inhibitor CgMIP-I (200 aa).

The N-terminal stretch at 1–19 (MKYLHTICLLFIFVARGNS) is a signal peptide. 7 cysteine pairs are disulfide-bonded: Cys-22–Cys-46, Cys-25–Cys-32, Cys-39–Cys-67, Cys-73–Cys-94, Cys-95–Cys-100, Cys-118–Cys-143, and Cys-136–Cys-165. An N-linked (GlcNAc...) asparagine glycan is attached at Asn-176.

Belongs to the CNF-like-inhibitor family. Homomer of 110 kDa composed of 20-25-kDa subunits. N-glycosylated. The glycosidic chain may contain superficial sialic acid residues. As to expression, expressed by the liver.

It localises to the secreted. Its function is as follows. Inhibits the enzymatic activity of basic phospholipase A2. Specifically neutralizes PLA2, myotoxic, edema-forming, cytolytic, and anti-coagulant activities, as well as intracerebral lethal effect of the basic myotoxin I from the same venom (AC P0DQP6), crotoxin heterodimer and crotoxin subunit B alone. Does not block the enzymatic activity of crude acidic PLA2 fractions from the same venom. The protein is Phospholipase A2 inhibitor CgMIP-I of Cerrophidion godmani (Porthidium godmani).